Reading from the N-terminus, the 180-residue chain is Shikimate kinase (180 aa).

14–19 (GAGKST) contributes to the ATP binding site. S18 provides a ligand contact to Mg(2+). Residues D36, R60, and G82 each contribute to the substrate site. R120 contributes to the ATP binding site. R140 provides a ligand contact to substrate. Q157 is an ATP binding site.

This sequence belongs to the shikimate kinase family. Monomer. The cofactor is Mg(2+).

The protein resides in the cytoplasm. It carries out the reaction shikimate + ATP = 3-phosphoshikimate + ADP + H(+). Its pathway is metabolic intermediate biosynthesis; chorismate biosynthesis; chorismate from D-erythrose 4-phosphate and phosphoenolpyruvate: step 5/7. In terms of biological role, catalyzes the specific phosphorylation of the 3-hydroxyl group of shikimic acid using ATP as a cosubstrate. This Haemophilus influenzae (strain PittEE) protein is Shikimate kinase.